The chain runs to 419 residues: Zinc metalloproteinase-disintegrin-like atrolysin-A (419 aa).

The Peptidase M12B domain maps to 6-202 (RYVELVIVAD…YNPQCILNEP (197 aa)). E9 is a Ca(2+) binding site. N72 is a glycosylation site (N-linked (GlcNAc...) asparagine). Ca(2+) is bound at residue D93. 3 cysteine pairs are disulfide-bonded: C117–C197, C157–C181, and C159–C164. Residue H142 coordinates Zn(2+). E143 is an active-site residue. Residues H146 and H152 each coordinate Zn(2+). Ca(2+) contacts are provided by C197, N200, V212, N215, L217, E219, E222, and D225. The Disintegrin domain maps to 210–296 (PPVCGNELLE…DCPTDDFHRN (87 aa)). 14 cysteine pairs are disulfide-bonded: C213-C242, C224-C237, C226-C232, C236-C259, C250-C256, C255-C281, C268-C288, C275-C307, C300-C312, C319-C369, C334-C376, C347-C357, C364-C398, and C392-C403. Positions 274–276 (ECD) match the D/ECD-tripeptide motif. Residues N326, N338, and N342 are each glycosylated (N-linked (GlcNAc...) asparagine).

The protein belongs to the venom metalloproteinase (M12B) family. P-III subfamily. P-IIIa sub-subfamily. Monomer. It depends on Zn(2+) as a cofactor. Expressed by the venom gland.

It is found in the secreted. It catalyses the reaction Cleavage of 3-Asn-|-Gln-4, 5-His-|-Leu-6, 10-His-|-Leu-11, 14-Ala-|-Leu-15 and 16-Tyr-|-Leu-17 in insulin B chain. Removes C-terminal Leu from small peptides.. In terms of biological role, snake venom zinc metalloproteinase-disintegrin that causes hemorrhage by provoking the degradation of the sub-endothelial matrix proteins (fibronectin, laminin, type IV collagen, nidogen, and gelatins) and disturbances in platelet function. The recombinant cysteine-rich domain interacts with the alpha-2/beta-1 integrin (ITGA2/ITGB1) (collagen receptor), and inhibits the platelet aggregation induced by collagen. The polypeptide is Zinc metalloproteinase-disintegrin-like atrolysin-A (Crotalus atrox (Western diamondback rattlesnake)).